The primary structure comprises 538 residues: MAQKPLRLLACGDVEGKFDILFNRVQAIQKKSGNFDLLLCVGNFFGSTQDAEWEEYKTGIKKAPIQTYVLGANNQETVKYFQDADGCELAENITYLGRKGIFTGSSGLQIVYLSGTESLNEPVPGYSFSPKDVSSLRMMLCTTSQFKGVDILLTSPWPKCVGNFGNSSGEVDTKKCGSALVSSLATGLKPRYHFAALEKTYYERLPYRNHIILQENAQHATRFIALANVGNPEKKKYLYAFSIVPMKLMDAAELVKQPPDVTENPYRKSGQEASIGKQILAPVEESACQFFFDLNEKQGRKRSSTGRDSKSSPHPKQPRKPPQPPGPCWFCLASPEVEKHLVVNIGTHCYLALAKGGLSDDHVLILPIGHYQSVVELSAEVVEEVEKYKATLRRFFKSRGKWCVVFERNYKSHHLQLQVIPVPISCSTTDDIKDAFITQAQEQQIELLEIPEHSDIKQIAQPGAAYFYVELDTGEKLFHRIKKNFPLQFGREVLASEAILNVPDKSDWRQCQISKEDEETLARRFRKDFEPYDFTLDD.

The segment at 298–324 is disordered; sequence QGRKRSSTGRDSKSSPHPKQPRKPPQP.

This sequence belongs to the CWF19 family. In terms of tissue distribution, expressed in many brain regions, including cerebellum, thalamus and occipital, parietal and temporal lobes (at protein level). Also expressed in the spinal cord (at protein level).

This chain is CWF19-like protein 1 (CWF19L1), found in Homo sapiens (Human).